We begin with the raw amino-acid sequence, 181 residues long: RNA pyrophosphohydrolase (181 aa).

The Nudix hydrolase domain maps to 6 to 149 (GFRPNVGIIL…KRRVYTRALQ (144 aa)). Positions 38-59 (GGIKAQETPEEALFRELEEEVG) match the Nudix box motif. The segment at 159–181 (GLPRQPPVGRPRRSAPPRGCRRA) is disordered. Positions 168–181 (RPRRSAPPRGCRRA) are enriched in basic residues.

It belongs to the Nudix hydrolase family. RppH subfamily. A divalent metal cation is required as a cofactor.

Its function is as follows. Accelerates the degradation of transcripts by removing pyrophosphate from the 5'-end of triphosphorylated RNA, leading to a more labile monophosphorylated state that can stimulate subsequent ribonuclease cleavage. This Alkalilimnicola ehrlichii (strain ATCC BAA-1101 / DSM 17681 / MLHE-1) protein is RNA pyrophosphohydrolase.